The sequence spans 167 residues: General odorant-binding protein 1 (167 aa).

The signal sequence occupies residues 1–22; the sequence is MAHTLQTVVLLLGTSILHPILA. 3 cysteine pairs are disulfide-bonded: Cys-41–Cys-76, Cys-72–Cys-130, and Cys-119–Cys-139.

Belongs to the PBP/GOBP family. Antenna.

Its function is as follows. Present in the aqueous fluid surrounding olfactory sensory dendrites and are thought to aid in the capture and transport of hydrophobic odorants into and through this fluid. This chain is General odorant-binding protein 1, found in Antheraea pernyi (Chinese oak silk moth).